Here is a 285-residue protein sequence, read N- to C-terminus: Putative ABC transporter ATP-binding protein CPE0195 (285 aa).

One can recognise an ABC transporter domain in the interval 6–242 (LKVEELNYNY…KEVIRKVNLR (237 aa)). Position 39-46 (39-46 (GGNGVGKS)) interacts with ATP.

It belongs to the ABC transporter superfamily.

Its subcellular location is the cell membrane. Functionally, probably part of an ABC transporter complex. Responsible for energy coupling to the transport system. This is Putative ABC transporter ATP-binding protein CPE0195 from Clostridium perfringens (strain 13 / Type A).